The primary structure comprises 669 residues: DNA ligase (669 aa).

NAD(+) is bound by residues 33 to 37 (DAEYD), 82 to 83 (SL), and E114. Residue K116 is the N6-AMP-lysine intermediate of the active site. Residues R137, E174, K291, and K315 each coordinate NAD(+). Zn(2+) contacts are provided by C409, C412, C427, and C433. The BRCT domain occupies 593 to 669 (EIPQPLAGKV…QTEQDLLALL (77 aa)).

This sequence belongs to the NAD-dependent DNA ligase family. LigA subfamily. Mg(2+) is required as a cofactor. The cofactor is Mn(2+).

It carries out the reaction NAD(+) + (deoxyribonucleotide)n-3'-hydroxyl + 5'-phospho-(deoxyribonucleotide)m = (deoxyribonucleotide)n+m + AMP + beta-nicotinamide D-nucleotide.. In terms of biological role, DNA ligase that catalyzes the formation of phosphodiester linkages between 5'-phosphoryl and 3'-hydroxyl groups in double-stranded DNA using NAD as a coenzyme and as the energy source for the reaction. It is essential for DNA replication and repair of damaged DNA. This is DNA ligase from Vibrio vulnificus (strain CMCP6).